The following is a 114-amino-acid chain: Cytokine SCM-1 beta (114 aa).

The first 21 residues, 1-21 (MRLLILALLGICSLTAYIVEG), serve as a signal peptide directing secretion. Residues cysteine 32 and cysteine 69 are joined by a disulfide bond. Positions 91 to 114 (RNNMIQTKPTGTQQSTNTAVTLTG) are disordered.

The protein belongs to the intercrine gamma family.

The protein localises to the secreted. Chemotactic activity for lymphocytes but not for monocytes or neutrophils. In Homo sapiens (Human), this protein is Cytokine SCM-1 beta (XCL2).